Reading from the N-terminus, the 377-residue chain is Leukocyte elastase inhibitor (377 aa).

An N-acetylmethionine modification is found at M1.

This sequence belongs to the serpin family. Ov-serpin subfamily.

It localises to the cytoplasm. Regulates the activity of the neutrophil proteases. The polypeptide is Leukocyte elastase inhibitor (serpinb1) (Xenopus tropicalis (Western clawed frog)).